Consider the following 430-residue polypeptide: Phosphomethylpyrimidine synthase (430 aa).

Substrate contacts are provided by residues N67, M96, Y125, H161, 183-185 (SRG), 224-227 (DALR), and E263. H267 lines the Zn(2+) pocket. A substrate-binding site is contributed by Y290. H331 serves as a coordination point for Zn(2+). Residues C406, C409, and C413 each coordinate [4Fe-4S] cluster.

It belongs to the ThiC family. As to quaternary structure, homodimer. The cofactor is [4Fe-4S] cluster.

The enzyme catalyses 5-amino-1-(5-phospho-beta-D-ribosyl)imidazole + S-adenosyl-L-methionine = 4-amino-2-methyl-5-(phosphooxymethyl)pyrimidine + CO + 5'-deoxyadenosine + formate + L-methionine + 3 H(+). It participates in cofactor biosynthesis; thiamine diphosphate biosynthesis. Functionally, catalyzes the synthesis of the hydroxymethylpyrimidine phosphate (HMP-P) moiety of thiamine from aminoimidazole ribotide (AIR) in a radical S-adenosyl-L-methionine (SAM)-dependent reaction. This chain is Phosphomethylpyrimidine synthase, found in Campylobacter jejuni subsp. jejuni serotype O:6 (strain 81116 / NCTC 11828).